The chain runs to 166 residues: Ribosome maturation factor RimM (166 aa).

The 76-residue stretch at 90 to 165 (NDNDAFSIFY…IITLKNIEGL (76 aa)) folds into the PRC barrel domain.

This sequence belongs to the RimM family. In terms of assembly, binds ribosomal protein uS19.

It is found in the cytoplasm. An accessory protein needed during the final step in the assembly of 30S ribosomal subunit, possibly for assembly of the head region. Essential for efficient processing of 16S rRNA. May be needed both before and after RbfA during the maturation of 16S rRNA. It has affinity for free ribosomal 30S subunits but not for 70S ribosomes. The sequence is that of Ribosome maturation factor RimM from Mesoplasma florum (strain ATCC 33453 / NBRC 100688 / NCTC 11704 / L1) (Acholeplasma florum).